Consider the following 924-residue polypeptide: LPS-assembly protein LptD (924 aa).

The signal sequence occupies residues 1–33; it reads MAVKSLVFRRKFPLLVTGSLLALQPVAALTVQA. Positions 58–102 are disordered; the sequence is NLPPRPAHTATSVSTAAAGSSVSGSGGETVEAEPTQRLVTESGGR. Over residues 66 to 90 the composition is skewed to low complexity; sequence TATSVSTAAAGSSVSGSGGETVEAE.

This sequence belongs to the LptD family. In terms of assembly, component of the lipopolysaccharide transport and assembly complex. Interacts with LptE and LptA.

It is found in the cell outer membrane. Its function is as follows. Together with LptE, is involved in the assembly of lipopolysaccharide (LPS) at the surface of the outer membrane. The protein is LPS-assembly protein LptD of Pseudomonas aeruginosa (strain UCBPP-PA14).